The primary structure comprises 444 residues: UDP-N-acetylmuramate--L-alanine ligase (444 aa).

110–116 (GAHGKTS) is a binding site for ATP.

This sequence belongs to the MurCDEF family.

It localises to the cytoplasm. It carries out the reaction UDP-N-acetyl-alpha-D-muramate + L-alanine + ATP = UDP-N-acetyl-alpha-D-muramoyl-L-alanine + ADP + phosphate + H(+). Its pathway is cell wall biogenesis; peptidoglycan biosynthesis. In terms of biological role, cell wall formation. The polypeptide is UDP-N-acetylmuramate--L-alanine ligase (Streptococcus pneumoniae (strain JJA)).